We begin with the raw amino-acid sequence, 223 residues long: MRGLFVTGTDTGVGKTEVSCALLRAARAAGLDAVGMKPAQSGHVPGEPSDAERLREASDCVEPLEAICPYTFAAPLAPAAAARLEGREVSLARVVEVARALAARHAAVVVEGAGGLLVPLTARETHADLAAALGLPVLVVARAGLGTVNHTALTVEALERRGLAVAGIVLNRTGPEDDPSVPLNPAEIARLTHREPIALLPWEPDIARRARSLGSILGAKIQF.

Thr16 lines the Mg(2+) pocket. Residue Lys37 is part of the active site. Ser41 is a binding site for substrate. Asp50 and Glu111 together coordinate Mg(2+). ATP contacts are provided by residues Asp50, 111–114 (EGAG), and 171–172 (NR).

The protein belongs to the dethiobiotin synthetase family. As to quaternary structure, homodimer. The cofactor is Mg(2+).

Its subcellular location is the cytoplasm. The enzyme catalyses (7R,8S)-7,8-diammoniononanoate + CO2 + ATP = (4R,5S)-dethiobiotin + ADP + phosphate + 3 H(+). Its pathway is cofactor biosynthesis; biotin biosynthesis; biotin from 7,8-diaminononanoate: step 1/2. Catalyzes a mechanistically unusual reaction, the ATP-dependent insertion of CO2 between the N7 and N8 nitrogen atoms of 7,8-diaminopelargonic acid (DAPA, also called 7,8-diammoniononanoate) to form a ureido ring. The chain is ATP-dependent dethiobiotin synthetase BioD from Anaeromyxobacter sp. (strain K).